Here is a 297-residue protein sequence, read N- to C-terminus: uncharacterized protein (297 aa).

The helical transmembrane segment at 191 to 211 (VMIILSCSNITILAVLSIVGL) threads the bilayer. Residues 275 to 287 (SKTSETQSVSGST) are compositionally biased toward polar residues. Positions 275 to 297 (SKTSETQSVSGSTHSDEKLTAPM) are disordered. Positions 288-297 (HSDEKLTAPM) are enriched in basic and acidic residues.

It is found in the host membrane. This is an uncharacterized protein from Cryphonectria parasitica mycoreovirus 1 (strain 9B21) (CpMYRV-1).